Consider the following 565-residue polypeptide: Thiol:disulfide interchange protein DsbD (565 aa).

Positions 1–19 (MAQRIFTLILLLCSTSVFA) are cleaved as a signal peptide. Disulfide bonds link Cys122–Cys128 and Cys182–Cys304. Transmembrane regions (helical) follow at residues 163–183 (LPFS…TPCV), 208–228 (LLTF…GLVV), 243–263 (YVLI…FGLF), 289–309 (GVFI…TAPL), 323–343 (WLGG…LMLI), 357–377 (WMEQ…VFLL), and 384–404 (IWGL…AFIT). The region spanning 434-565 (WAFGATHTAQ…FSAHLRDRQP (132 aa)) is the Thioredoxin domain. A disulfide bridge connects residues Cys480 and Cys483.

Belongs to the thioredoxin family. DsbD subfamily.

It is found in the cell inner membrane. The catalysed reaction is [protein]-dithiol + NAD(+) = [protein]-disulfide + NADH + H(+). It carries out the reaction [protein]-dithiol + NADP(+) = [protein]-disulfide + NADPH + H(+). Its function is as follows. Required to facilitate the formation of correct disulfide bonds in some periplasmic proteins and for the assembly of the periplasmic c-type cytochromes. Acts by transferring electrons from cytoplasmic thioredoxin to the periplasm. This transfer involves a cascade of disulfide bond formation and reduction steps. The chain is Thiol:disulfide interchange protein DsbD from Escherichia coli O6:H1 (strain CFT073 / ATCC 700928 / UPEC).